The sequence spans 236 residues: Leucyl/phenylalanyl-tRNA--protein transferase (236 aa).

This sequence belongs to the L/F-transferase family.

The protein resides in the cytoplasm. It carries out the reaction N-terminal L-lysyl-[protein] + L-leucyl-tRNA(Leu) = N-terminal L-leucyl-L-lysyl-[protein] + tRNA(Leu) + H(+). The catalysed reaction is N-terminal L-arginyl-[protein] + L-leucyl-tRNA(Leu) = N-terminal L-leucyl-L-arginyl-[protein] + tRNA(Leu) + H(+). It catalyses the reaction L-phenylalanyl-tRNA(Phe) + an N-terminal L-alpha-aminoacyl-[protein] = an N-terminal L-phenylalanyl-L-alpha-aminoacyl-[protein] + tRNA(Phe). Functions in the N-end rule pathway of protein degradation where it conjugates Leu, Phe and, less efficiently, Met from aminoacyl-tRNAs to the N-termini of proteins containing an N-terminal arginine or lysine. This Shewanella sediminis (strain HAW-EB3) protein is Leucyl/phenylalanyl-tRNA--protein transferase.